A 154-amino-acid chain; its full sequence is uncharacterized protein (154 aa).

The chain crosses the membrane as a helical span at residues 23–43; that stretch reads SAVALVTFAGAALSGVIPAIA.

It localises to the membrane. This is an uncharacterized protein from Mycobacterium tuberculosis (strain CDC 1551 / Oshkosh).